The sequence spans 76 residues: Acyl carrier protein (76 aa).

A Carrier domain is found at 1–76; sequence MAIFDDIKEV…DVVRYIETNK (76 aa). Serine 36 bears the O-(pantetheine 4'-phosphoryl)serine mark.

It belongs to the acyl carrier protein (ACP) family. 4'-phosphopantetheine is transferred from CoA to a specific serine of apo-ACP by AcpS. This modification is essential for activity because fatty acids are bound in thioester linkage to the sulfhydryl of the prosthetic group.

It is found in the cytoplasm. It participates in lipid metabolism; fatty acid biosynthesis. Carrier of the growing fatty acid chain in fatty acid biosynthesis. In Wolinella succinogenes (strain ATCC 29543 / DSM 1740 / CCUG 13145 / JCM 31913 / LMG 7466 / NCTC 11488 / FDC 602W) (Vibrio succinogenes), this protein is Acyl carrier protein.